A 186-amino-acid polypeptide reads, in one-letter code: Probable GTP-binding protein EngB (186 aa).

An EngB-type G domain is found at 18–186 (DKKEICFIGR…LKKLIGSVIL (169 aa)). GTP-binding positions include 26–33 (GRSNVGKS), 52–56 (GRTQL), 69–72 (DLPG), 135–138 (NKAD), and 166–168 (VSA). Positions 33 and 54 each coordinate Mg(2+).

It belongs to the TRAFAC class TrmE-Era-EngA-EngB-Septin-like GTPase superfamily. EngB GTPase family. Mg(2+) serves as cofactor.

Functionally, necessary for normal cell division and for the maintenance of normal septation. This chain is Probable GTP-binding protein EngB, found in Malacoplasma penetrans (strain HF-2) (Mycoplasma penetrans).